Here is a 483-residue protein sequence, read N- to C-terminus: Chromosomal replication initiator protein DnaA (483 aa).

The domain I, interacts with DnaA modulators stretch occupies residues 1-71 (MKEFWQTCVS…EALAAEWYQR (71 aa)). The tract at residues 71–145 (RPVQVQFELP…DAANIVYERS (75 aa)) is domain II. The interval 146–362 (RLNTDLTFEN…GALRKVLAYA (217 aa)) is domain III, AAA+ region. Positions 190, 192, 193, and 194 each coordinate ATP. Residues 363–483 (RFHGREALNV…LHVLEQTLKG (121 aa)) form a domain IV, binds dsDNA region.

This sequence belongs to the DnaA family. Oligomerizes as a right-handed, spiral filament on DNA at oriC.

Its subcellular location is the cytoplasm. Functionally, plays an essential role in the initiation and regulation of chromosomal replication. ATP-DnaA binds to the origin of replication (oriC) to initiate formation of the DNA replication initiation complex once per cell cycle. Binds the DnaA box (a 9 base pair repeat at the origin) and separates the double-stranded (ds)DNA. Forms a right-handed helical filament on oriC DNA; dsDNA binds to the exterior of the filament while single-stranded (ss)DNA is stabiized in the filament's interior. The ATP-DnaA-oriC complex binds and stabilizes one strand of the AT-rich DNA unwinding element (DUE), permitting loading of DNA polymerase. After initiation quickly degrades to an ADP-DnaA complex that is not apt for DNA replication. Binds acidic phospholipids. This Bordetella avium (strain 197N) protein is Chromosomal replication initiator protein DnaA.